The primary structure comprises 500 residues: Proline/betaine transporter (500 aa).

Residues 1–37 (MLKRKKIKPITLGDVTIIDDGKLRKAITAASLGNAME) lie on the Cytoplasmic side of the membrane. A helical membrane pass occupies residues 38-58 (WFDFGVYGFVAYALGKVFFPG). Residues 59 to 65 (ADPSVQM) are Periplasmic-facing. A helical transmembrane segment spans residues 66–86 (IAALATFSVPFLIRPLGGLFF). The Cytoplasmic segment spans residues 87-97 (GMLGDKYGRQK). The chain crosses the membrane as a helical span at residues 98-118 (ILAITIVIMSISTFCIGLIPS). The Periplasmic portion of the chain corresponds to 119 to 121 (YAT). The helical transmembrane segment at 122 to 142 (IGIWAPILLLLCKMAQGFSVG) threads the bilayer. Over 143–169 (GEYTGASIFVAEYSPDRKRGFMGSWLD) the chain is Cytoplasmic. The helical transmembrane segment at 170-190 (FGSIAGFVLGAGVVVLISTIV) threads the bilayer. Topologically, residues 191–194 (GEEN) are periplasmic. Residues 195 to 215 (FLEWGWRIPFFIALPLGIIGL) form a helical membrane-spanning segment. Over 216–260 (YLRHALEETPAFQQHVDKLEQGDREGLQDGPKVSFKEIATKHWRS) the chain is Cytoplasmic. Residues 261–281 (LLSCIGLVIATNVTYYMLLTY) traverse the membrane as a helical segment. Topologically, residues 282–297 (MPSYLSHNLHYSEDHG) are periplasmic. Residues 298–318 (VLIIIAIMIGMLFVQPVMGLL) form a helical membrane-spanning segment. Topologically, residues 319–325 (SDRFGRR) are cytoplasmic. The helical transmembrane segment at 326 to 346 (PFVIMGSIALFALAIPAFILI) threads the bilayer. Over 347 to 350 (NSNV) the chain is Periplasmic. The chain crosses the membrane as a helical span at residues 351–371 (IGLIFAGLLMLAVILNCFTGV). Over 372–390 (MASTLPAMFPTHIRYSALA) the chain is Cytoplasmic. The helical transmembrane segment at 391–411 (AAFNISVLIAGLTPTLAAWLV) threads the bilayer. The Periplasmic portion of the chain corresponds to 412–416 (ESSQD). A helical membrane pass occupies residues 417 to 437 (LMMPAYYLMVIAVIGLITGIS). Residues 438–500 (MKETANRPLK…LVQQHPRIDE (63 aa)) are Cytoplasmic-facing. Positions 453–498 (ASDIQEAKEILGEHYDNIEQKIDDIDQEIAELQVKRSRLVQQHPRI) form a coiled coil.

Belongs to the major facilitator superfamily. Metabolite:H+ Symporter (MHS) family (TC 2.A.1.6) family.

It localises to the cell inner membrane. Proton symporter that senses osmotic shifts and responds by importing osmolytes such as proline, glycine betaine, stachydrine, pipecolic acid, ectoine and taurine. It is both an osmosensor and an osmoregulator which is available to participate early in the bacterial osmoregulatory response. This Salmonella typhimurium (strain LT2 / SGSC1412 / ATCC 700720) protein is Proline/betaine transporter (proP).